The primary structure comprises 299 residues: tRNA dimethylallyltransferase (299 aa).

11–18 (GPTAVGKT) serves as a coordination point for ATP. Residue 13–18 (TAVGKT) participates in substrate binding. Residues 36–39 (DSQQ) form an interaction with substrate tRNA region.

This sequence belongs to the IPP transferase family. In terms of assembly, monomer. It depends on Mg(2+) as a cofactor.

The catalysed reaction is adenosine(37) in tRNA + dimethylallyl diphosphate = N(6)-dimethylallyladenosine(37) in tRNA + diphosphate. In terms of biological role, catalyzes the transfer of a dimethylallyl group onto the adenine at position 37 in tRNAs that read codons beginning with uridine, leading to the formation of N6-(dimethylallyl)adenosine (i(6)A). The sequence is that of tRNA dimethylallyltransferase from Streptococcus pyogenes serotype M1.